Here is a 411-residue protein sequence, read N- to C-terminus: Arginine deiminase (411 aa).

C401 serves as the catalytic Amidino-cysteine intermediate.

It belongs to the arginine deiminase family.

The protein localises to the cytoplasm. The catalysed reaction is L-arginine + H2O = L-citrulline + NH4(+). It functions in the pathway amino-acid degradation; L-arginine degradation via ADI pathway; carbamoyl phosphate from L-arginine: step 1/2. In Staphylococcus epidermidis (strain ATCC 35984 / DSM 28319 / BCRC 17069 / CCUG 31568 / BM 3577 / RP62A), this protein is Arginine deiminase.